The chain runs to 452 residues: Probable phosphoglucosamine mutase (452 aa).

Ser-101 serves as the catalytic Phosphoserine intermediate. 4 residues coordinate Mg(2+): Ser-101, Asp-242, Asp-244, and Asp-246. At Ser-101 the chain carries Phosphoserine.

It belongs to the phosphohexose mutase family. Requires Mg(2+) as cofactor. Activated by phosphorylation.

The enzyme catalyses alpha-D-glucosamine 1-phosphate = D-glucosamine 6-phosphate. Its function is as follows. Catalyzes the conversion of glucosamine-6-phosphate to glucosamine-1-phosphate. The chain is Probable phosphoglucosamine mutase from Methanosphaera stadtmanae (strain ATCC 43021 / DSM 3091 / JCM 11832 / MCB-3).